Here is a 256-residue protein sequence, read N- to C-terminus: Transcription factor BHLH094 (256 aa).

A disordered region spans residues 1–125 (MDPAPSLAAE…TPPEPPKQDY (125 aa)). Residues 79 to 97 (PEAKRLKPMKSSDKNDSLR) are compositionally biased toward basic and acidic residues. The interval 134 to 147 (QATDSHSLAERARR) is basic motif; degenerate. The bHLH domain occupies 134 to 184 (QATDSHSLAERARREKISERMKILQDLVPGCNKVIGKASVLDEIINYIQSL). Residues 148–184 (EKISERMKILQDLVPGCNKVIGKASVLDEIINYIQSL) form a helix-loop-helix motif region.

The protein belongs to the bHLH protein family. In terms of assembly, interacts with RSS3. Forms a ternary complex with RSS3 and TIFY11A/JAZ9 in the nucleus.

It localises to the nucleus. Functionally, transcription factor that forms a ternary complex with RSS3 and TIFY11A/JAZ9 to negatively regulate jasmonate-responsive genes. This is Transcription factor BHLH094 from Oryza sativa subsp. japonica (Rice).